We begin with the raw amino-acid sequence, 272 residues long: 1,4-dihydroxy-6-naphtoate synthase (272 aa).

Residues 55 to 57 (KLS) and 107 to 108 (TA) contribute to the substrate site. Catalysis depends on His145, which acts as the Proton acceptor.

It belongs to the MqnA/MqnD family. MqnD subfamily.

It carries out the reaction cyclic dehypoxanthinylfutalosinate = 1,4-dihydroxy-6-naphthoate + dihydroxyacetone. It functions in the pathway quinol/quinone metabolism; menaquinone biosynthesis. Its function is as follows. Catalyzes the conversion of cyclic dehypoxanthine futalosine (cyclic DHFL) into 1,4-dihydroxy-6-naphthoate, a step in the biosynthesis of menaquinone (MK, vitamin K2). This Thermus thermophilus (strain ATCC 27634 / DSM 579 / HB8) protein is 1,4-dihydroxy-6-naphtoate synthase.